The following is a 458-amino-acid chain: Elongation factor 1-alpha (458 aa).

The residue at position 2 (Gly-2) is a N,N,N-trimethylglycine; by EFM7. Lys-3 carries the post-translational modification N6,N6-dimethyllysine; by EFM7; alternate. Position 3 is an N6-methyllysine; by EFM7; alternate (Lys-3). The tr-type G domain maps to 5 to 240; the sequence is KSHINVVVIG…DAIEQPSRPT (236 aa). The G1 stretch occupies residues 14–21; it reads GHVDSGKS. Position 18 is a phosphoserine (Ser-18). Residues Ser-21 and Thr-22 each coordinate GTP. Lys-30 bears the N6-methyllysine; by EFM1 mark. The interval 70–74 is G2; the sequence is GITID. Thr-72 is modified (phosphothreonine). Lys-79 carries the post-translational modification N6,N6,N6-trimethyllysine; by EFM5. Thr-82 bears the Phosphothreonine mark. The tract at residues 91–94 is G3; it reads DAPG. Residues Asn-153, Lys-154, and Asp-156 each coordinate GTP. Residues 153 to 156 form a G4 region; the sequence is NKMD. The residue at position 163 (Ser-163) is a Phosphoserine. 3 residues coordinate GTP: Ser-192, Gly-193, and Trp-194. The tract at residues 192 to 194 is G5; it reads SGW. Glycyl lysine isopeptide (Lys-Gly) (interchain with G-Cter in ubiquitin) cross-links involve residues Lys-224, Lys-242, and Lys-253. Position 259 is a phosphothreonine (Thr-259). A Glycyl lysine isopeptide (Lys-Gly) (interchain with G-Cter in ubiquitin) cross-link involves residue Lys-271. Ser-289 carries the post-translational modification Phosphoserine. Lys-316 is modified (N6,N6-dimethyllysine; by EFM4; alternate). An N6-methyllysine; by EFM4; alternate modification is found at Lys-316. Lys-390 bears the N6-methyllysine; by EFM6 mark. Lys-393 is covalently cross-linked (Glycyl lysine isopeptide (Lys-Gly) (interchain with G-Cter in ubiquitin)). Ser-414 carries the phosphoserine modification. Thr-430 carries the post-translational modification Phosphothreonine. Lys-437 participates in a covalent cross-link: Glycyl lysine isopeptide (Lys-Gly) (interchain with G-Cter in ubiquitin). Lys-458 carries the lysine methyl ester modification.

This sequence belongs to the TRAFAC class translation factor GTPase superfamily. Classic translation factor GTPase family. EF-Tu/EF-1A subfamily. The eukaryotic elongation factor 1 complex (eEF1) is probably a heterohexamer. Two trimeric complexes, each composed of eEF1A (TEF1 or TEF2), eEF1Balpha (EFB1) and eEF1Bgamma (CAM1 or TEF4), are probably dimerized via the eF1Bgamma subunits. Interacts with eEF1Balpha; the interaction is direct. Interacts with GCN2 (via C-terminus); this interaction is direct, occurs in amino acid-repleted cells, may be stabilized in a ribosome-dependent manner, reduces GCN2-mediated eIF-2-alpha phosphorylation and is lost in amino acid-starved cells and by uncharged tRNAs. Interacts with CEX1. Interacts with elongation factor 3 (YEF3 or HEF3). Interacts with NAP1. Interacts with SRV2. Interacts with chaperone ZPR1; the interaction is required for its proper folding. Binds to actin and forms a ternary complex with BNI1 and profilin. Interacts with the proteasome, probably via RPT1. Associates with ribosomes. S-thiolated in response to oxidative stress, probably inhibiting the protein and causing a reduction in protein synthesis. In terms of processing, glutaminylated at Glu-45. An L-glutamine is linked to Glu-45 via the alpha amino group. This glutaminylation is yeast-specific and not essential for the normal functions of eEF1A. However, eEF1A glutaminylation slightly reduced growth under antibiotic-induced translational stress conditions.

It localises to the cytoplasm. Its subcellular location is the cytoskeleton. The protein operates within protein biosynthesis; polypeptide chain elongation. Inhibited by narciclasine. In terms of biological role, GTP-binding component of the eukaryotic elongation factor 1 complex (eEF1). In its active GTP-bound form, binds to and delivers aminoacyl-tRNA to the A-site of ribosomes during protein biosynthesis. In the presence of a correct codon-anticodon match between the aminoacyl-tRNA and the A-site codon of the ribosome-bound mRNA, the ribosome acts as a GTPase activator and the GTP is hydrolyzed. The inactive GDP-bound form leaves the ribosome and must be recycled by its guanine nucleotide exchange factor (GEF) (eEF1B subcomplex) before binding another molecule of aminoacyl-tRNA. Required for nuclear export of aminoacyl-tRNAs. May also be involved in translational quality control by targeting cotranslationally damaged proteins to the proteasome. Also exhibits actin filament-binding and -bundling activities and is involved in cytoskeleton organization. Plays a role as a negative regulator of GCN2 kinase activity by inhibiting GCN2-mediated eIF-2-alpha phosphorylation in amino acid-repleted cells. The polypeptide is Elongation factor 1-alpha (TEF1) (Saccharomyces cerevisiae (strain ATCC 204508 / S288c) (Baker's yeast)).